The sequence spans 234 residues: Leucyl/phenylalanyl-tRNA--protein transferase (234 aa).

Belongs to the L/F-transferase family.

It is found in the cytoplasm. It catalyses the reaction N-terminal L-lysyl-[protein] + L-leucyl-tRNA(Leu) = N-terminal L-leucyl-L-lysyl-[protein] + tRNA(Leu) + H(+). The enzyme catalyses N-terminal L-arginyl-[protein] + L-leucyl-tRNA(Leu) = N-terminal L-leucyl-L-arginyl-[protein] + tRNA(Leu) + H(+). It carries out the reaction L-phenylalanyl-tRNA(Phe) + an N-terminal L-alpha-aminoacyl-[protein] = an N-terminal L-phenylalanyl-L-alpha-aminoacyl-[protein] + tRNA(Phe). Its function is as follows. Functions in the N-end rule pathway of protein degradation where it conjugates Leu, Phe and, less efficiently, Met from aminoacyl-tRNAs to the N-termini of proteins containing an N-terminal arginine or lysine. This is Leucyl/phenylalanyl-tRNA--protein transferase from Hahella chejuensis (strain KCTC 2396).